The primary structure comprises 138 residues: Acidic phospholipase A2 VP7 (138 aa).

Positions M1 to G16 are cleaved as a signal peptide. Intrachain disulfides connect C42/C131, C44/C60, C59/C111, C65/C138, C66/C104, C73/C97, and C91/C102. Residues Y43, G45, and G47 each contribute to the Ca(2+) site. H63 is an active-site residue. Residue D64 participates in Ca(2+) binding. D105 is a catalytic residue.

It belongs to the phospholipase A2 family. Group II subfamily. D49 sub-subfamily. In terms of assembly, does not form a complex. The cofactor is Ca(2+). As to expression, expressed by the venom gland.

The protein resides in the secreted. It catalyses the reaction a 1,2-diacyl-sn-glycero-3-phosphocholine + H2O = a 1-acyl-sn-glycero-3-phosphocholine + a fatty acid + H(+). Snake venom phospholipase A2 (PLA2) that is not toxic by itself, but the synergistical mixture of a basic and this acidic protein is lethal. PLA2 catalyzes the calcium-dependent hydrolysis of the 2-acyl groups in 3-sn-phosphoglycerides. In Daboia palaestinae (Palestine viper), this protein is Acidic phospholipase A2 VP7.